Here is a 140-residue protein sequence, read N- to C-terminus: uncharacterized protein (140 aa).

It belongs to the MG067/MG068/MG395 family.

This is an uncharacterized protein from Mycoplasma pneumoniae (strain ATCC 29342 / M129 / Subtype 1) (Mycoplasmoides pneumoniae).